Reading from the N-terminus, the 509-residue chain is Aromatase (509 aa).

Residue Cys-437 participates in heme binding.

It belongs to the cytochrome P450 family. Heme serves as cofactor.

It is found in the membrane. It catalyses the reaction testosterone + 3 reduced [NADPH--hemoprotein reductase] + 3 O2 = 17beta-estradiol + formate + 3 oxidized [NADPH--hemoprotein reductase] + 4 H2O + 4 H(+). The catalysed reaction is androst-4-ene-3,17-dione + 3 reduced [NADPH--hemoprotein reductase] + 3 O2 = estrone + formate + 3 oxidized [NADPH--hemoprotein reductase] + 4 H2O + 4 H(+). Catalyzes the formation of aromatic C18 estrogens from C19 androgens. This is Aromatase (CYP19A1) from Taeniopygia guttata (Zebra finch).